We begin with the raw amino-acid sequence, 172 residues long: Translation initiation factor IF-3 (172 aa).

This sequence belongs to the IF-3 family. In terms of assembly, monomer.

Its subcellular location is the cytoplasm. Functionally, IF-3 binds to the 30S ribosomal subunit and shifts the equilibrium between 70S ribosomes and their 50S and 30S subunits in favor of the free subunits, thus enhancing the availability of 30S subunits on which protein synthesis initiation begins. This is Translation initiation factor IF-3 from Campylobacter fetus subsp. fetus (strain 82-40).